The following is a 418-amino-acid chain: MPGYYLWTIGCQMNQAESDRLGRLFELWGYSLADKAEDAELVLVNSCVVREHAENKVVNRLHLLRSLKNENPKLKIALTGCLVGQDISLIKKKFPFVDYIFGPGSMPDWREIPEGFILPLRPPVSANVTIMQGCNNFCTYCVVPYRRGREKSRSIAEIGCEVAELVRRGSREVVLLGQNVDSYGHDLPEKPCLADLLSALHDITGLLRIRFLTSHPKDISQKLIDAMAHLPKVCRSLSLPVQSGDDTILASMRRGYTNQQYRELVERIKTAMPDISLQTDLIVGFPSENEEQFNQSYKLMADIGYDAIHVAAYSPRPQTVAAHDMADDVPVIEKKRRLKLIEDLQKETVGKANAALMDTFAEVLVEGLQKNKWQGRTLGGKLVFLESDLPLEGCLVKVKIFKTSPWSLQAKLVNIMES.

Positions 2–118 (PGYYLWTIGC…WREIPEGFIL (117 aa)) constitute an MTTase N-terminal domain. Residues cysteine 11, cysteine 47, cysteine 81, cysteine 134, cysteine 138, and cysteine 141 each contribute to the [4Fe-4S] cluster site. The 232-residue stretch at 120–351 (LRPPVSANVT…EDLQKETVGK (232 aa)) folds into the Radical SAM core domain. Positions 346 to 414 (KETVGKANAA…PWSLQAKLVN (69 aa)) constitute a TRAM domain.

Belongs to the methylthiotransferase family. MiaB subfamily. In terms of assembly, monomer. It depends on [4Fe-4S] cluster as a cofactor.

Its subcellular location is the cytoplasm. It carries out the reaction N(6)-dimethylallyladenosine(37) in tRNA + (sulfur carrier)-SH + AH2 + 2 S-adenosyl-L-methionine = 2-methylsulfanyl-N(6)-dimethylallyladenosine(37) in tRNA + (sulfur carrier)-H + 5'-deoxyadenosine + L-methionine + A + S-adenosyl-L-homocysteine + 2 H(+). Catalyzes the methylthiolation of N6-(dimethylallyl)adenosine (i(6)A), leading to the formation of 2-methylthio-N6-(dimethylallyl)adenosine (ms(2)i(6)A) at position 37 in tRNAs that read codons beginning with uridine. In Dehalococcoides mccartyi (strain ATCC BAA-2100 / JCM 16839 / KCTC 5957 / BAV1), this protein is tRNA-2-methylthio-N(6)-dimethylallyladenosine synthase.